The chain runs to 529 residues: UDP-glucuronosyltransferase 2B9 (529 aa).

The N-terminal stretch at 1-21 (MSVKWTSVILLIQLSFYFSSG) is a signal peptide. Residues Asn67, Asn68, and Asn88 are each glycosylated (N-linked (GlcNAc...) asparagine). The helical transmembrane segment at 494 to 514 (IGFLLACVATVIFVIMKCCLF) threads the bilayer.

This sequence belongs to the UDP-glycosyltransferase family.

It localises to the microsome membrane. Its subcellular location is the endoplasmic reticulum membrane. It catalyses the reaction glucuronate acceptor + UDP-alpha-D-glucuronate = acceptor beta-D-glucuronoside + UDP + H(+). UDPGT is of major importance in the conjugation and subsequent elimination of potentially toxic xenobiotics and endogenous compounds. This isozyme is active on C18, C19, and C21 steroids, bile acids, and several xenobiotics including eugenol, 1-naphthol, and p-nitrophenol. The chain is UDP-glucuronosyltransferase 2B9 (UGT2B9) from Macaca fascicularis (Crab-eating macaque).